A 470-amino-acid polypeptide reads, in one-letter code: Nuclear receptor subfamily 0 group B member 1 (470 aa).

Repeat copies occupy residues 1–67 (MAGE…YRCC), 68–133 (FCGK…YRCC), and 134–200 (FCGE…YRCC). The 4 X 67 AA tandem repeats stretch occupies residues 1 to 253 (MAGENHQWQG…RPVALKNPQV (253 aa)). Short sequence motifs (LXXLL motif) lie at residues 13 to 17 (LYNML), 80 to 84 (LYSML), and 146 to 150 (LYSLL). Residues 201–253 (FCGEDHPQQGSTLYCMPTSTNQAQAAPEERPRAPWWDTSSGALRPVALKNPQV) form a 4; truncated repeat. The region spanning 205 to 469 (DHPQQGSTLY…DMMLEMLCTK (265 aa)) is the NR LBD domain. The AF-2 motif signature appears at 461 to 466 (MMLEML).

This sequence belongs to the nuclear hormone receptor family. NR0 subfamily. In terms of assembly, homodimer. Interacts with NR5A1, NR5A2, NR0B2 and with COPS2. Interacts with ESRRB; represses ESRRB activity at the GATA6 promoter.

The protein resides in the nucleus. The protein localises to the cytoplasm. Its function is as follows. Nuclear receptor that lacks a DNA-binding domain and acts as a corepressor that inhibits the transcriptional activity of other nuclear receptors through heterodimeric interactions. Component of a cascade required for the development of the hypothalamic-pituitary-adrenal-gonadal axis. May also have a role in the development of the embryo and in the maintenance of embryonic stem cell pluripotency. The polypeptide is Nuclear receptor subfamily 0 group B member 1 (NR0B1) (Macaca mulatta (Rhesus macaque)).